The chain runs to 393 residues: Dual specificity mitogen-activated protein kinase kinase 1 (393 aa).

Positions 1–27 are disordered; the sequence is MPKKKPTPIQLNPAPDGSAVNGTSSAE. Positions 68-361 constitute a Protein kinase domain; sequence FEKISELGAG…LKQLMVHAFI (294 aa). ATP is bound by residues 74-82 and Lys-97; that span reads LGAGNGGVV. The Proton acceptor role is filled by Asp-190. 2 positions are modified to phosphoserine; by RAF: Ser-218 and Ser-222. Residues 270-307 form an RAF1-binding region; it reads ELELMFGCQVEGDAAETPPRPRTPGRPLSSYGMDSRPP. Phosphothreonine is present on Thr-286. The residue at position 292 (Thr-292) is a Phosphothreonine; by MAPK1. Position 298 is a phosphoserine; by PAK (Ser-298).

The protein belongs to the protein kinase superfamily. STE Ser/Thr protein kinase family. MAP kinase kinase subfamily. Found in a complex with at least BRAF, HRAS, MAP2K1, MAPK3/ERK1 and RGS14. Forms a heterodimer with MAP2K2/MEK2. Forms heterodimers with KSR2 which further dimerize to form tetramers. Interacts with KSR1 or KSR2 and BRAF; the interaction with KSR1 or KSR2 mediates KSR1-BRAF or KSR2-BRAF dimerization. Interacts with ARBB2, LAMTOR3, MAPK1/ERK2 and RAF1. Interacts with MAPK1/ERK2. Interacts with MORG1. Interacts with PPARG. Interacts with SGK1. Interacts with BIRC6/bruce. Interacts with KAT7; the interaction promotes KAT7 phosphorylation. Interacts with RAF1 and NEK10; the interaction is required for ERK1/2-signaling pathway activation in response to UV irradiation. Interacts with TRAF3IP3. Interacts with MOS. In terms of processing, phosphorylation at Ser-218 and Ser-222 by MAP kinase kinase kinases (RAF or MEKK1) positively regulates the kinase activity. Also phosphorylated at Thr-292 by MAPK1/ERK2 and at Ser-298 by PAK. MAPK1/ERK2 phosphorylation of Thr-292 occurs in response to cellular adhesion and leads to inhibition of Ser-298 phosphorylation by PAK. Autophosphorylated at Ser-218 and Ser-222, autophosphosphorylation is promoted by NEK10 following UV irradiation.

Its subcellular location is the cytoplasm. The protein resides in the cytoskeleton. It localises to the microtubule organizing center. It is found in the centrosome. The protein localises to the spindle pole body. Its subcellular location is the nucleus. The protein resides in the membrane. The catalysed reaction is L-seryl-[protein] + ATP = O-phospho-L-seryl-[protein] + ADP + H(+). The enzyme catalyses L-threonyl-[protein] + ATP = O-phospho-L-threonyl-[protein] + ADP + H(+). It catalyses the reaction L-tyrosyl-[protein] + ATP = O-phospho-L-tyrosyl-[protein] + ADP + H(+). Its activity is regulated as follows. Ras proteins such as HRAS mediate the activation of RAF proteins such as RAF1 or BRAF which in turn activate extracellular signal-regulated kinases (ERK) through MAPK (mitogen-activated protein kinases) and ERK kinases MAP2K1/MEK1 and MAP2K2/MEK2. Activation occurs through phosphorylation of Ser-218 and Ser-222. MAP2K1/MEK1 binds KSR1 or KSR2 releasing the inhibitory intramolecular interaction between KSR1 or KSR2 protein kinase and N-terminal domains. This allows KSR1 or KSR2 dimerization with BRAF leading to BRAF activation and phosphorylation of MAP2K1. MAP2K1/MEK1 is also the target of negative feed-back regulation by its substrate kinases, such as MAPK1/ERK2. These phosphorylate MAP2K1/MEK1 on Thr-292, thereby facilitating dephosphorylation of the activating residues Ser-218 and Ser-222. Inhibited by serine/threonine phosphatase 2A. Dual specificity protein kinase which acts as an essential component of the MAP kinase signal transduction pathway. Binding of extracellular ligands such as growth factors, cytokines and hormones to their cell-surface receptors activates RAS and this initiates RAF1 activation. RAF1 then further activates the dual-specificity protein kinases MAP2K1/MEK1 and MAP2K2/MEK2. Both MAP2K1/MEK1 and MAP2K2/MEK2 function specifically in the MAPK/ERK cascade, and catalyze the concomitant phosphorylation of a threonine and a tyrosine residue in a Thr-Glu-Tyr sequence located in the extracellular signal-regulated kinases MAPK3/ERK1 and MAPK1/ERK2, leading to their activation and further transduction of the signal within the MAPK/ERK cascade. Activates BRAF in a KSR1 or KSR2-dependent manner; by binding to KSR1 or KSR2 releases the inhibitory intramolecular interaction between KSR1 or KSR2 protein kinase and N-terminal domains which promotes KSR1 or KSR2-BRAF dimerization and BRAF activation. Depending on the cellular context, this pathway mediates diverse biological functions such as cell growth, adhesion, survival and differentiation, predominantly through the regulation of transcription, metabolism and cytoskeletal rearrangements. One target of the MAPK/ERK cascade is peroxisome proliferator-activated receptor gamma (PPARG), a nuclear receptor that promotes differentiation and apoptosis. MAP2K1/MEK1 has been shown to export PPARG from the nucleus. The MAPK/ERK cascade is also involved in the regulation of endosomal dynamics, including lysosome processing and endosome cycling through the perinuclear recycling compartment (PNRC), as well as in the fragmentation of the Golgi apparatus during mitosis. The protein is Dual specificity mitogen-activated protein kinase kinase 1 (MAP2K1) of Oryctolagus cuniculus (Rabbit).